The sequence spans 478 residues: MDKKPLNTLISATGLWMSRTGKLHKIRHHEVSKRKIYIEMECGERLVVNNSRSCRAARALRHHKYRKICKHCRVSDEDLNKFLTRTNEDKSNAKVTVVSAPKIRKVMPKSVARTPKPLENTAPVQTLPSESQPAPTTPISASTTAPASTSTTAPAPASTTAPAPASTTAPASASTTISTSAMPASTSAQGTTKFNYISGGFPRPIPVQASAPALTKSQIDRLQGLLSPKDEISLDSGTPFRKLESELLSRRRKDLKQIYAEEREHYLGKLEREITKFFVDRGFLEIKSPILIPMEYIERMGIDNDKELSKQIFRVDNNFCLRPMLAPNLYNYLRKLNRALPDPIKIFEIGPCYRKESDGKEHLEEFTMLNFCQMGSGCTRENLEAIIKDFLDYLGIDFEIVGDSCMVYGDTLDVMHGDLELSSAVVGPVPMDRDWGINKPWIGAGFGLERLLKVMHNFKNIKRASRSESYYNGISTNL.

A disordered region spans residues 106-188; it reads VMPKSVARTP…TSAMPASTSA (83 aa). The span at 122–132 shows a compositional bias: polar residues; the sequence is APVQTLPSESQ. Positions 133–188 are enriched in low complexity; sequence PAPTTPISASTTAPASTSTTAPAPASTTAPAPASTTAPASASTTISTSAMPASTSA.

The protein belongs to the class-II aminoacyl-tRNA synthetase family.

It localises to the cytoplasm. It catalyses the reaction tRNA(Pyl) + L-pyrrolysine + ATP = L-pyrrolysyl-tRNA(Pyl) + AMP + diphosphate. In terms of biological role, catalyzes the attachment of pyrrolysine to tRNA(Pyl). Pyrrolysine is a lysine derivative encoded by the termination codon UAG. The chain is Pyrrolysine--tRNA ligase from Methanosarcina thermophila.